A 141-amino-acid chain; its full sequence is Endoribonuclease YbeY (141 aa).

Residues His107, His111, and His117 each contribute to the Zn(2+) site.

Belongs to the endoribonuclease YbeY family. Zn(2+) serves as cofactor.

The protein resides in the cytoplasm. In terms of biological role, single strand-specific metallo-endoribonuclease involved in late-stage 70S ribosome quality control and in maturation of the 3' terminus of the 16S rRNA. In Leptospira interrogans serogroup Icterohaemorrhagiae serovar Lai (strain 56601), this protein is Endoribonuclease YbeY.